Here is a 241-residue protein sequence, read N- to C-terminus: Ribonuclease PH (241 aa).

Residues R87 and 125 to 127 (GTR) each bind phosphate.

It belongs to the RNase PH family. As to quaternary structure, homohexameric ring arranged as a trimer of dimers.

The catalysed reaction is tRNA(n+1) + phosphate = tRNA(n) + a ribonucleoside 5'-diphosphate. In terms of biological role, phosphorolytic 3'-5' exoribonuclease that plays an important role in tRNA 3'-end maturation. Removes nucleotide residues following the 3'-CCA terminus of tRNAs; can also add nucleotides to the ends of RNA molecules by using nucleoside diphosphates as substrates, but this may not be physiologically important. Probably plays a role in initiation of 16S rRNA degradation (leading to ribosome degradation) during starvation. The chain is Ribonuclease PH from Dehalococcoides mccartyi (strain ATCC BAA-2100 / JCM 16839 / KCTC 5957 / BAV1).